The chain runs to 523 residues: WD repeat-containing protein WDS homolog (523 aa).

The region spanning 16-48 (KKHEFIRILVQCLYSLGFKNSASCLEFESKILY) is the LisH domain. The region spanning 49–107 (KTADSEFLEKQVLSGNWDSCVQVLDRIFDNSMDDTRNTALYLVFKQCLLEYLKRGDVSL) is the CTLH domain. 7 WD repeats span residues 222-261 (AHKN…KVEL), 267-306 (SHQN…LRHT), 310-353 (NNTG…KAWR), 355-394 (TRIP…ERVI), 395-434 (SEEQ…KQPL), 438-480 (GHRQ…PLEV), and 483-523 (GHSM…KPLN).

As to quaternary structure, interacts with RANBPM.

It localises to the cytoplasm. This chain is WD repeat-containing protein WDS homolog, found in Arabidopsis thaliana (Mouse-ear cress).